Reading from the N-terminus, the 326-residue chain is Olfactory receptor 10X1 (326 aa).

The Extracellular portion of the chain corresponds to 1 to 41 (MVLNVYCCFFQISDIQTMKINQTILKEFILVGFSVYPHVQT). A glycan (N-linked (GlcNAc...) asparagine) is linked at N21. The chain crosses the membrane as a helical span at residues 42 to 62 (FLFVVFFCLYLLTLAGNLIIM). Residues 63 to 70 (GLTWVDRS) lie on the Cytoplasmic side of the membrane. A helical membrane pass occupies residues 71–91 (LHTPMYLFLSALSFSETCYTL). Topologically, residues 92 to 115 (TIVPKMLEDLLAKDRSISVTGCSL) are extracellular. C113 and C205 are oxidised to a cystine. Residues 116 to 136 (QMCFFLGLGGTNCIILTLMGY) traverse the membrane as a helical segment. Topologically, residues 137 to 155 (DRFLAICNPLRYPLLMTNI) are cytoplasmic. Residues 156 to 176 (VCGQLVASACTAGFFISLTET) form a helical membrane-spanning segment. Residues 177 to 213 (ALIFRDSFCRPNLVKHFFCHMLAVIRLSCIDSNHTEF) lie on the Extracellular side of the membrane. N-linked (GlcNAc...) asparagine glycosylation occurs at N209. Residues 214–233 (IITLISVSGLLGTLLLIILT) form a helical membrane-spanning segment. Over 234 to 253 (DVFIISTVLRIPSAEGKQKA) the chain is Cytoplasmic. The helical transmembrane segment at 254-274 (FTTCASHLTVVIIHFGFASIV) threads the bilayer. Over 275 to 284 (YLKPEASGDD) the chain is Extracellular. Residues 285-305 (TLIAVPYTVITPFLSPIIFSL) form a helical membrane-spanning segment. Over 306–326 (RNKDMKNAFRRMMGNTVALKK) the chain is Cytoplasmic.

It belongs to the G-protein coupled receptor 1 family.

It localises to the cell membrane. In terms of biological role, odorant receptor. This chain is Olfactory receptor 10X1 (OR10X1), found in Homo sapiens (Human).